Reading from the N-terminus, the 441-residue chain is tRNA modification GTPase MnmE (441 aa).

The (6S)-5-formyl-5,6,7,8-tetrahydrofolate site is built by R21, E79, and K118. The region spanning G214–T370 is the TrmE-type G domain. Residues N224 to S229, S243 to T249, and D268 to G271 each bind GTP. S228 and T249 together coordinate Mg(2+). K441 is a binding site for (6S)-5-formyl-5,6,7,8-tetrahydrofolate.

This sequence belongs to the TRAFAC class TrmE-Era-EngA-EngB-Septin-like GTPase superfamily. TrmE GTPase family. Homodimer. Heterotetramer of two MnmE and two MnmG subunits. The cofactor is K(+).

Its subcellular location is the cytoplasm. Functionally, exhibits a very high intrinsic GTPase hydrolysis rate. Involved in the addition of a carboxymethylaminomethyl (cmnm) group at the wobble position (U34) of certain tRNAs, forming tRNA-cmnm(5)s(2)U34. The polypeptide is tRNA modification GTPase MnmE (Campylobacter concisus (strain 13826)).